The primary structure comprises 113 residues: MSNDILLQLDKILDARKTESPETSYVASLYEKGLDKILKKVGEEATETVMAAKDAEYTQNNDNLVYEVADLWFHTLILLSHQGLSSTDITNELQKRFGLSGHEEKANRSKNDA.

It belongs to the PRA-PH family.

The protein resides in the cytoplasm. The enzyme catalyses 1-(5-phospho-beta-D-ribosyl)-ATP + H2O = 1-(5-phospho-beta-D-ribosyl)-5'-AMP + diphosphate + H(+). Its pathway is amino-acid biosynthesis; L-histidine biosynthesis; L-histidine from 5-phospho-alpha-D-ribose 1-diphosphate: step 2/9. This chain is Phosphoribosyl-ATP pyrophosphatase, found in Hydrogenovibrio crunogenus (strain DSM 25203 / XCL-2) (Thiomicrospira crunogena).